The chain runs to 299 residues: GTPase Era (299 aa).

The Era-type G domain maps to 8–176; that stretch reads RCGYVAIVGR…EKLVGERLPE (169 aa). The tract at residues 16 to 23 is G1; the sequence is GRPNVGKS. 16 to 23 is a binding site for GTP; sequence GRPNVGKS. Positions 42–46 are G2; that stretch reads QTTRH. The segment at 63 to 66 is G3; that stretch reads DTPG. GTP is bound by residues 63–67 and 125–128; these read DTPGL and NKAD. The segment at 125-128 is G4; the sequence is NKAD. A G5 region spans residues 155-157; that stretch reads ISA. Positions 199–283 constitute a KH type-2 domain; that stretch reads IREKIMRQLG…MLNLWVKVKG (85 aa).

This sequence belongs to the TRAFAC class TrmE-Era-EngA-EngB-Septin-like GTPase superfamily. Era GTPase family. In terms of assembly, monomer.

The protein resides in the cytoplasm. Its subcellular location is the cell inner membrane. Its function is as follows. An essential GTPase that binds both GDP and GTP, with rapid nucleotide exchange. Plays a role in 16S rRNA processing and 30S ribosomal subunit biogenesis and possibly also in cell cycle regulation and energy metabolism. The chain is GTPase Era from Ectopseudomonas mendocina (strain ymp) (Pseudomonas mendocina).